The following is a 60-amino-acid chain: Toxin C10S2C2 (60 aa).

Cystine bridges form between cysteine 3/cysteine 22, cysteine 17/cysteine 39, cysteine 41/cysteine 52, and cysteine 53/cysteine 58. The important for binding to L-type calcium channels stretch occupies residues cysteine 41–tyrosine 48.

It belongs to the three-finger toxin family. Short-chain subfamily. L-type calcium blocker sub-subfamily. In terms of tissue distribution, expressed by the venom gland.

Its subcellular location is the secreted. In terms of biological role, this specific blocker of the L-type calcium channel (Cav1/CACNA1) is a smooth muscle relaxant and an inhibitor of cardiac contractions. The chain is Toxin C10S2C2 from Dendroaspis angusticeps (Eastern green mamba).